A 64-amino-acid chain; its full sequence is uncharacterized protein (64 aa).

A helical membrane pass occupies residues 15 to 37 (VVVPRFVRFIVYVVLFTVAVQRV).

Belongs to the HHV-5 US34A protein family.

The protein localises to the host membrane. This is an uncharacterized protein from Human cytomegalovirus (strain AD169) (HHV-5).